Here is a 94-residue protein sequence, read N- to C-terminus: Pyrimidine/purine nucleoside phosphorylase (94 aa).

It belongs to the nucleoside phosphorylase PpnP family.

It carries out the reaction a purine D-ribonucleoside + phosphate = a purine nucleobase + alpha-D-ribose 1-phosphate. The catalysed reaction is adenosine + phosphate = alpha-D-ribose 1-phosphate + adenine. It catalyses the reaction cytidine + phosphate = cytosine + alpha-D-ribose 1-phosphate. The enzyme catalyses guanosine + phosphate = alpha-D-ribose 1-phosphate + guanine. It carries out the reaction inosine + phosphate = alpha-D-ribose 1-phosphate + hypoxanthine. The catalysed reaction is thymidine + phosphate = 2-deoxy-alpha-D-ribose 1-phosphate + thymine. It catalyses the reaction uridine + phosphate = alpha-D-ribose 1-phosphate + uracil. The enzyme catalyses xanthosine + phosphate = alpha-D-ribose 1-phosphate + xanthine. Catalyzes the phosphorolysis of diverse nucleosides, yielding D-ribose 1-phosphate and the respective free bases. Can use uridine, adenosine, guanosine, cytidine, thymidine, inosine and xanthosine as substrates. Also catalyzes the reverse reactions. The polypeptide is Pyrimidine/purine nucleoside phosphorylase (Pectobacterium carotovorum subsp. carotovorum (strain PC1)).